The following is a 350-amino-acid chain: Methylthioribose-1-phosphate isomerase (350 aa).

The active-site Proton donor is the D241.

Belongs to the eIF-2B alpha/beta/delta subunits family. MtnA subfamily.

The protein resides in the cytoplasm. It is found in the nucleus. The enzyme catalyses 5-(methylsulfanyl)-alpha-D-ribose 1-phosphate = 5-(methylsulfanyl)-D-ribulose 1-phosphate. Its pathway is amino-acid biosynthesis; L-methionine biosynthesis via salvage pathway; L-methionine from S-methyl-5-thio-alpha-D-ribose 1-phosphate: step 1/6. In terms of biological role, catalyzes the interconversion of methylthioribose-1-phosphate (MTR-1-P) into methylthioribulose-1-phosphate (MTRu-1-P). The sequence is that of Methylthioribose-1-phosphate isomerase from Nematostella vectensis (Starlet sea anemone).